The primary structure comprises 111 residues: Iron-sulfur cluster assembly protein CyaY (111 aa).

The protein belongs to the frataxin family.

Its function is as follows. Involved in iron-sulfur (Fe-S) cluster assembly. May act as a regulator of Fe-S biogenesis. This chain is Iron-sulfur cluster assembly protein CyaY, found in Cupriavidus metallidurans (strain ATCC 43123 / DSM 2839 / NBRC 102507 / CH34) (Ralstonia metallidurans).